A 1291-amino-acid polypeptide reads, in one-letter code: Ethylene-insensitive protein 2.2 (1291 aa).

Transmembrane regions (helical) follow at residues 18–38 (ALPALGPGLLIAIGYVDPGKW), 48–68 (FGFDLVLPMLIFNFVAILCQY), 96–116 (FLGVQAALSVIALDLTMILGI), 128–148 (LSTCVFLAAVDAVLFPVFATL), 155–175 (SFLSTCIAGFLLLLYFFGVLI), and 195–215 (SAFALMSLLGASIMPHNFFLH). An N-linked (GlcNAc...) asparagine glycan is attached at Asn-227. 7 helical membrane passes run 231-251 (GALCLNHFFAILCIFSGIYLV), 253-273 (YVLMNSAANVFYSTGLVLLTF), 288-308 (VALCVFSLILFFANHITALTW), 335-355 (IIAVVPALYCVWTSGVEGIYQ), 356-376 (LLIFTQVMVALLLPSSVIPLF), 393-413 (FLEFLALISFMGMLGIKIIFV), and 441-461 (VLLITACSSFCLMLWLAATPL). The tract at residues 498–518 (TEEESIGGQEQLSGPGKSAES) is disordered. Asn-550 carries N-linked (GlcNAc...) asparagine glycosylation. The interval 614–662 (AEKEDDEGDSWEPEESSKGVPGSTSSLTSDGPGSFRSLSGKSDEGGNGA) is disordered. The segment covering 617 to 627 (EDDEGDSWEPE) has biased composition (acidic residues). Over residues 635–653 (GSTSSLTSDGPGSFRSLSG) the composition is skewed to polar residues. Residues Ser-647 and Ser-664 each carry the phosphoserine modification. 2 disordered regions span residues 742–768 (QIHSSLGDSPNHLRVPSNIDSSYGGQR) and 787–808 (GPSRSIADSSERRYSSVHTLPS). A compositionally biased stretch (polar residues) spans 759–768 (NIDSSYGGQR). Thr-818 is subject to Phosphothreonine. The segment at 836–856 (GSSSLNGQMDSPAPISPSLGP) is disordered. Asn-891 carries an N-linked (GlcNAc...) asparagine glycan. Position 923 is a phosphoserine (Ser-923). The N-linked (GlcNAc...) asparagine glycan is linked to Asn-1027. The segment at 1210–1229 (HRSSPPVSNGMLPPASKPGR) is disordered. The short motif at 1262 to 1269 (DVAFPKGK) is the Nuclear localization signal element.

This sequence belongs to the NRAMP (TC 2.A.55) family.

The protein localises to the endoplasmic reticulum membrane. It localises to the nucleus. Its subcellular location is the cytoplasm. Functionally, central factor in signaling pathways regulated by ethylene (ET) and involved in various processes including development, plant defense, senescence, nucleotide sugar flux, and tropisms. Its function is as follows. Trafficking signal inducing ethylene response. The nuclear localization is both necessary and sufficient to activate EIN3-mediated transcription and ethylene responses. This chain is Ethylene-insensitive protein 2.2, found in Populus trichocarpa (Western balsam poplar).